Here is a 325-residue protein sequence, read N- to C-terminus: BTB/POZ domain-containing protein KCTD12 (325 aa).

The interval 1–28 (MALADSTRGLPNGGGGGGGSGSSSSSAE) is disordered. Ala2 is subject to N-acetylalanine. A compositionally biased stretch (gly residues) spans 11-21 (PNGGGGGGGSG). A Phosphotyrosine modification is found at Tyr119. Residues 129 to 202 (LGAPQQPGPG…PLLTPSQSLD (74 aa)) are disordered. Phosphoserine is present on residues Ser151, Ser171, and Ser185. Thr196 is subject to Phosphothreonine. Ser200 is subject to Phosphoserine.

Interacts as a tetramer with GABBR1 and GABBR2. In terms of tissue distribution, present in a variety of fetal organs, with highest expression levels in the cochlea and brain and, in stark contrast, is detected only at extremely low levels in adult organs, such as brain and lung.

The protein localises to the presynaptic cell membrane. It localises to the postsynaptic cell membrane. Its function is as follows. Auxiliary subunit of GABA-B receptors that determine the pharmacology and kinetics of the receptor response. Increases agonist potency and markedly alter the G-protein signaling of the receptors by accelerating onset and promoting desensitization. The sequence is that of BTB/POZ domain-containing protein KCTD12 (KCTD12) from Homo sapiens (Human).